The primary structure comprises 213 residues: Pyridoxine/pyridoxamine 5'-phosphate oxidase (213 aa).

Residues 60-65 (RMVLMK), 75-76 (YS), lysine 82, and glutamine 104 each bind FMN. Substrate is bound at residue lysine 65. Residues tyrosine 122 and arginine 126 each contribute to the substrate site. FMN contacts are provided by residues 139 to 140 (QS) and tryptophan 184. 190 to 192 (RLH) contributes to the substrate binding site. Arginine 194 is an FMN binding site.

The protein belongs to the pyridoxamine 5'-phosphate oxidase family. Homodimer. The cofactor is FMN.

The catalysed reaction is pyridoxamine 5'-phosphate + O2 + H2O = pyridoxal 5'-phosphate + H2O2 + NH4(+). The enzyme catalyses pyridoxine 5'-phosphate + O2 = pyridoxal 5'-phosphate + H2O2. It functions in the pathway cofactor metabolism; pyridoxal 5'-phosphate salvage; pyridoxal 5'-phosphate from pyridoxamine 5'-phosphate: step 1/1. Its pathway is cofactor metabolism; pyridoxal 5'-phosphate salvage; pyridoxal 5'-phosphate from pyridoxine 5'-phosphate: step 1/1. Functionally, catalyzes the oxidation of either pyridoxine 5'-phosphate (PNP) or pyridoxamine 5'-phosphate (PMP) into pyridoxal 5'-phosphate (PLP). This is Pyridoxine/pyridoxamine 5'-phosphate oxidase from Bradyrhizobium diazoefficiens (strain JCM 10833 / BCRC 13528 / IAM 13628 / NBRC 14792 / USDA 110).